Consider the following 137-residue polypeptide: Large ribosomal subunit protein uL16 (137 aa).

This sequence belongs to the universal ribosomal protein uL16 family. In terms of assembly, part of the 50S ribosomal subunit.

Binds 23S rRNA and is also seen to make contacts with the A and possibly P site tRNAs. The sequence is that of Large ribosomal subunit protein uL16 from Xanthobacter autotrophicus (strain ATCC BAA-1158 / Py2).